The chain runs to 91 residues: Small ribosomal subunit protein bS18 (91 aa).

Belongs to the bacterial ribosomal protein bS18 family. Part of the 30S ribosomal subunit. Forms a tight heterodimer with protein bS6.

Binds as a heterodimer with protein bS6 to the central domain of the 16S rRNA, where it helps stabilize the platform of the 30S subunit. The polypeptide is Small ribosomal subunit protein bS18 (Paraburkholderia phymatum (strain DSM 17167 / CIP 108236 / LMG 21445 / STM815) (Burkholderia phymatum)).